The sequence spans 733 residues: Photosystem I P700 chlorophyll a apoprotein A2 (733 aa).

Helical transmembrane passes span 46–69 (IFAS…FHVA), 134–157 (LYLG…LHLQ), 174–198 (LNHH…HVAL), 272–290 (IAHH…GHMY), 329–352 (LHIQ…QHMY), 368–394 (AALY…IFFV), 416–438 (AIIS…LYIH), and 516–534 (FLVH…LILV). Residues Cys-558 and Cys-567 each coordinate [4Fe-4S] cluster. A run of 2 helical transmembrane segments spans residues 574-595 (AFYL…YWHW) and 642-664 (LSVW…MFLI). Residues His-653, Met-661, and Tyr-669 each coordinate chlorophyll a. Trp-670 is a binding site for phylloquinone. Residues 706–726 (LVGLVHFAVGYILTYAAFVIA) traverse the membrane as a helical segment.

Belongs to the PsaA/PsaB family. As to quaternary structure, the PsaA/B heterodimer binds the P700 chlorophyll special pair and subsequent electron acceptors. PSI consists of a core antenna complex that captures photons, and an electron transfer chain that converts photonic excitation into a charge separation. The eukaryotic PSI reaction center is composed of at least 11 subunits. P700 is a chlorophyll a/chlorophyll a' dimer, A0 is one or more chlorophyll a, A1 is one or both phylloquinones and FX is a shared 4Fe-4S iron-sulfur center. serves as cofactor.

It is found in the plastid. The protein localises to the chloroplast thylakoid membrane. The catalysed reaction is reduced [plastocyanin] + hnu + oxidized [2Fe-2S]-[ferredoxin] = oxidized [plastocyanin] + reduced [2Fe-2S]-[ferredoxin]. PsaA and PsaB bind P700, the primary electron donor of photosystem I (PSI), as well as the electron acceptors A0, A1 and FX. PSI is a plastocyanin/cytochrome c6-ferredoxin oxidoreductase, converting photonic excitation into a charge separation, which transfers an electron from the donor P700 chlorophyll pair to the spectroscopically characterized acceptors A0, A1, FX, FA and FB in turn. Oxidized P700 is reduced on the lumenal side of the thylakoid membrane by plastocyanin or cytochrome c6. The polypeptide is Photosystem I P700 chlorophyll a apoprotein A2 (Trieres chinensis (Marine centric diatom)).